The chain runs to 242 residues: Probable transcriptional regulatory protein MHP7448_0474 (242 aa).

The protein belongs to the TACO1 family.

It localises to the cytoplasm. This is Probable transcriptional regulatory protein MHP7448_0474 from Mesomycoplasma hyopneumoniae (strain 7448) (Mycoplasma hyopneumoniae).